A 329-amino-acid polypeptide reads, in one-letter code: Biotin synthase (329 aa).

One can recognise a Radical SAM core domain in the interval 48–278; sequence FLGTGVDLCS…DRKIAVCGGR (231 aa). [4Fe-4S] cluster is bound by residues cysteine 66, cysteine 70, and cysteine 73. Serine 143 and cysteine 203 together coordinate [2Fe-2S] cluster.

The protein belongs to the radical SAM superfamily. Biotin synthase family. Homodimer. Requires [4Fe-4S] cluster as cofactor. It depends on [2Fe-2S] cluster as a cofactor.

The enzyme catalyses (4R,5S)-dethiobiotin + (sulfur carrier)-SH + 2 reduced [2Fe-2S]-[ferredoxin] + 2 S-adenosyl-L-methionine = (sulfur carrier)-H + biotin + 2 5'-deoxyadenosine + 2 L-methionine + 2 oxidized [2Fe-2S]-[ferredoxin]. It participates in cofactor biosynthesis; biotin biosynthesis; biotin from 7,8-diaminononanoate: step 2/2. Functionally, catalyzes the conversion of dethiobiotin (DTB) to biotin by the insertion of a sulfur atom into dethiobiotin via a radical-based mechanism. This chain is Biotin synthase, found in Geobacter sulfurreducens (strain ATCC 51573 / DSM 12127 / PCA).